Reading from the N-terminus, the 151-residue chain is Putative pre-16S rRNA nuclease (151 aa).

Belongs to the YqgF nuclease family.

It is found in the cytoplasm. Functionally, could be a nuclease involved in processing of the 5'-end of pre-16S rRNA. This is Putative pre-16S rRNA nuclease from Paraburkholderia phymatum (strain DSM 17167 / CIP 108236 / LMG 21445 / STM815) (Burkholderia phymatum).